Consider the following 81-residue polypeptide: Acyl carrier protein (81 aa).

The Carrier domain maps to 3–78 (QEIFEKVKSI…AAVDYIEKEQ (76 aa)). An O-(pantetheine 4'-phosphoryl)serine modification is found at Ser-38.

Belongs to the acyl carrier protein (ACP) family. In terms of processing, 4'-phosphopantetheine is transferred from CoA to a specific serine of apo-ACP by AcpS. This modification is essential for activity because fatty acids are bound in thioester linkage to the sulfhydryl of the prosthetic group.

Its subcellular location is the cytoplasm. It functions in the pathway lipid metabolism; fatty acid biosynthesis. In terms of biological role, carrier of the growing fatty acid chain in fatty acid biosynthesis. This is Acyl carrier protein from Crocosphaera subtropica (strain ATCC 51142 / BH68) (Cyanothece sp. (strain ATCC 51142)).